Consider the following 307-residue polypeptide: F-box protein At5g03100 (307 aa).

In terms of domain architecture, F-box spans 8–54; sequence VDFISSLPDEILHHILANTPTKLAIRTSVLSKRWKHVWYETPSISIV.

In Arabidopsis thaliana (Mouse-ear cress), this protein is F-box protein At5g03100.